A 412-amino-acid polypeptide reads, in one-letter code: MMKEKVIFLVDMQSFYASVEKAENPHLKNRPVIVSGDPEKRGGVVLAACPLAKQKGVVNASRLWEAQEKCPEAVVLRPRMQRYIDVSLQITAILEEYTDLVEPYSIDEQFMDITGSQKLFGTPMEIAKSIQGRIMREIGVYARVGIGPNKALAKIACDNFAKKNKNGIFTLTKENMKTEMWPLPVGSMFGVGSRMKHHLNRMGISTIGGLAAFPLDLLKKKWGINGHVLWMTANGIDYSPVSTSSLDGQKAIGHGMTLPRDYEHFDKEIKVVLLELSEEVCRRSRNAGVMGQTVSVSCRGADFDWPTGFNRQVKLAEPTNSTQDVYEAVRRLFLTFWDGKPVRRLGVNLSQLSSDDIWQLNLFQDYAKKMSLGYVMDGIKNRFGDTAIIRAASLTAAGQAFERAAKIGGHYK.

The region spanning 7 to 192 (IFLVDMQSFY…LPVGSMFGVG (186 aa)) is the UmuC domain. 2 residues coordinate Mg(2+): aspartate 11 and aspartate 107. Residue glutamate 108 is part of the active site.

It belongs to the DNA polymerase type-Y family. As to quaternary structure, monomer. It depends on Mg(2+) as a cofactor.

The protein resides in the cytoplasm. It catalyses the reaction DNA(n) + a 2'-deoxyribonucleoside 5'-triphosphate = DNA(n+1) + diphosphate. Functionally, poorly processive, error-prone DNA polymerase involved in untargeted mutagenesis. Copies undamaged DNA at stalled replication forks, which arise in vivo from mismatched or misaligned primer ends. These misaligned primers can be extended by PolIV. Exhibits no 3'-5' exonuclease (proofreading) activity. May be involved in translesion synthesis (TSL), in conjunction with the beta clamp from PolIII. This chain is DNA polymerase IV 2 (dinB2), found in Bacillus subtilis (strain 168).